The following is a 200-amino-acid chain: 3-isopropylmalate dehydratase small subunit (200 aa).

This sequence belongs to the LeuD family. LeuD type 1 subfamily. As to quaternary structure, heterodimer of LeuC and LeuD.

It carries out the reaction (2R,3S)-3-isopropylmalate = (2S)-2-isopropylmalate. The protein operates within amino-acid biosynthesis; L-leucine biosynthesis; L-leucine from 3-methyl-2-oxobutanoate: step 2/4. Its function is as follows. Catalyzes the isomerization between 2-isopropylmalate and 3-isopropylmalate, via the formation of 2-isopropylmaleate. The protein is 3-isopropylmalate dehydratase small subunit of Edwardsiella ictaluri (strain 93-146).